The following is a 688-amino-acid chain: Bifunctional protein GAL10 (688 aa).

Residues 1–346 (MSEDKYCLVT…TQDNPFGYQI (346 aa)) form a galactowaldenase region. 6–37 (YCLVTGGAGYIGSHTVVELCEAGYKCIVVDNL) contacts NAD(+). The segment at 347-688 (KGVDSKFFGD…HKLSYTFRTL (342 aa)) is mutarotase. The For mutarotase activity role is filled by histidine 525.

It in the N-terminal section; belongs to the NAD(P)-dependent epimerase/dehydratase family. The protein in the C-terminal section; belongs to the aldose epimerase family. It depends on NAD(+) as a cofactor.

The enzyme catalyses UDP-alpha-D-glucose = UDP-alpha-D-galactose. It catalyses the reaction alpha-D-glucose = beta-D-glucose. It participates in carbohydrate metabolism; galactose metabolism. Its pathway is carbohydrate metabolism; hexose metabolism. Its function is as follows. Mutarotase converts alpha-aldose to the beta-anomer. It is active on D-glucose, L-arabinose, D-xylose, D-galactose, maltose and lactose. This chain is Bifunctional protein GAL10 (GAL10), found in Kluyveromyces lactis (strain ATCC 8585 / CBS 2359 / DSM 70799 / NBRC 1267 / NRRL Y-1140 / WM37) (Yeast).